Reading from the N-terminus, the 237-residue chain is Protein ULTRAPETALA 1 (237 aa).

The 99-residue stretch at 18–116 (EELQEMSGVN…SKTVLLKYYN (99 aa)) folds into the SAND domain. A CW-type zinc finger spans residues 133-191 (VCHRDEFVGCNDCGKERRFRLRSRDECRLHHNAMGDPNWKCSDFPYDKITCEEEEERGS).

Interacts with HHO5. Associates with ATX1 for trimethylating 'Lys-4' on histone H3 (H3K4me3) at flower MADS box gene loci. Expressed at low levels in seedlings, roots, shoots, leaves, stems, inflorescences, pollen, flowers and siliques, with highest levels dividing tissues including inflorescence.

Its subcellular location is the cytoplasm. It is found in the nucleus. Functionally, putative transcription factor that acts as a key negative regulator of cell accumulation in shoot and floral meristems. Negatively regulates the size of the WUSCHEL (WUS)-expressing organizing center in inflorescence meristems. May act by down-regulating expression of WUS. Acts as an antirepressor that counteracts EMF1 action through modulation of trimethylated 'Lys-4' on histone H3 (H3K4me3) marks on target gene loci (including genes involved in salt stress response and flower development). Collaboratively with RBL and CYP40/SQN, influences floral meristem (FM) determinacy in an AGAMOUS and SUPERMAN-dependent manner, thus contributing to the floral developmental homeostasis. This Arabidopsis thaliana (Mouse-ear cress) protein is Protein ULTRAPETALA 1.